Reading from the N-terminus, the 338-residue chain is Glycerol-3-phosphate dehydrogenase [NAD(P)+] (338 aa).

Residues Ser13, Trp14, and Lys108 each coordinate NADPH. Sn-glycerol 3-phosphate-binding residues include Lys108, Gly139, and Ser141. Ala143 provides a ligand contact to NADPH. Sn-glycerol 3-phosphate-binding residues include Lys194, Asp247, Ser257, Arg258, and Asn259. The active-site Proton acceptor is the Lys194. Arg258 contributes to the NADPH binding site. Positions 282 and 284 each coordinate NADPH.

Belongs to the NAD-dependent glycerol-3-phosphate dehydrogenase family.

The protein localises to the cytoplasm. It carries out the reaction sn-glycerol 3-phosphate + NAD(+) = dihydroxyacetone phosphate + NADH + H(+). It catalyses the reaction sn-glycerol 3-phosphate + NADP(+) = dihydroxyacetone phosphate + NADPH + H(+). Its pathway is membrane lipid metabolism; glycerophospholipid metabolism. In terms of biological role, catalyzes the reduction of the glycolytic intermediate dihydroxyacetone phosphate (DHAP) to sn-glycerol 3-phosphate (G3P), the key precursor for phospholipid synthesis. The protein is Glycerol-3-phosphate dehydrogenase [NAD(P)+] of Listeria innocua serovar 6a (strain ATCC BAA-680 / CLIP 11262).